The sequence spans 561 residues: DNA ligase B (561 aa).

Lys-125 acts as the N6-AMP-lysine intermediate in catalysis.

The protein belongs to the NAD-dependent DNA ligase family. LigB subfamily.

It carries out the reaction NAD(+) + (deoxyribonucleotide)n-3'-hydroxyl + 5'-phospho-(deoxyribonucleotide)m = (deoxyribonucleotide)n+m + AMP + beta-nicotinamide D-nucleotide.. Its function is as follows. Catalyzes the formation of phosphodiester linkages between 5'-phosphoryl and 3'-hydroxyl groups in double-stranded DNA using NAD as a coenzyme and as the energy source for the reaction. The chain is DNA ligase B from Salmonella heidelberg (strain SL476).